Reading from the N-terminus, the 103-residue chain is Large ribosomal subunit protein eL42 (103 aa).

Cys18 and Cys21 together coordinate Zn(2+). A C4-type zinc finger spans residues 18-81 (CPKCRTHTEH…TVLKLKCSKC (64 aa)). The disordered stretch occupies residues 40–62 (LSEGERRYARKKKGYGSKRKPEQ). The span at 47 to 57 (YARKKKGYGSK) shows a compositional bias: basic residues. Zn(2+) is bound by residues Cys78 and Cys81.

The protein belongs to the eukaryotic ribosomal protein eL42 family. Part of the 50S ribosomal subunit. Zn(2+) is required as a cofactor.

Binds to the 23S rRNA. This is Large ribosomal subunit protein eL42 from Desulfurococcus amylolyticus (strain DSM 18924 / JCM 16383 / VKM B-2413 / 1221n) (Desulfurococcus kamchatkensis).